The chain runs to 345 residues: Baculoviral IAP repeat-containing protein 7-B (345 aa).

BIR repeat units lie at residues arginine 46 to glutamine 112 and arginine 154 to leucine 219. Residues cysteine 188, cysteine 191, histidine 208, and cysteine 215 each coordinate Zn(2+). Residue serine 237 is modified to Phosphoserine. At serine 241 the chain carries Phosphoserine; by MAPK1. Residue serine 253 is modified to Phosphoserine. Serine 257 carries the phosphoserine; by MAPK1 modification. The interval threonine 258–glutamate 286 is disordered. Residues cysteine 298 to arginine 333 form an RING-type zinc finger.

Belongs to the IAP family. Post-translationally, auto-ubiquitinated, and degraded in a 2-step mechanism; a caspase-independent first step and a caspase-dependent second step. Phosphorylated via MAPK-dependent and CDK-dependent pathways during oocyte maturation. Phosphorylation does not appear to affect caspase inhibition or autoubiquitination activity.

The protein localises to the cytoplasm. The enzyme catalyses S-ubiquitinyl-[E2 ubiquitin-conjugating enzyme]-L-cysteine + [acceptor protein]-L-lysine = [E2 ubiquitin-conjugating enzyme]-L-cysteine + N(6)-ubiquitinyl-[acceptor protein]-L-lysine.. Its function is as follows. Weak apoptotic suppressor. Has E3 ubiquitin-protein ligase activity. Weak inhibitor of caspase activity. The chain is Baculoviral IAP repeat-containing protein 7-B (birc7-b) from Xenopus laevis (African clawed frog).